The following is a 293-amino-acid chain: Glutamyl-Q tRNA(Asp) synthetase (293 aa).

L-glutamate is bound by residues 9 to 13 (RFAPS) and glutamate 45. A 'HIGH' region motif is present at residues 12 to 22 (PSPSGELHFGS). 4 residues coordinate Zn(2+): cysteine 101, cysteine 103, tyrosine 115, and cysteine 119. L-glutamate contacts are provided by tyrosine 172 and arginine 190. Positions 228 to 232 (KLSKQ) match the 'KMSKS' region motif. Lysine 231 serves as a coordination point for ATP.

It belongs to the class-I aminoacyl-tRNA synthetase family. GluQ subfamily. It depends on Zn(2+) as a cofactor.

Its function is as follows. Catalyzes the tRNA-independent activation of glutamate in presence of ATP and the subsequent transfer of glutamate onto a tRNA(Asp). Glutamate is transferred on the 2-amino-5-(4,5-dihydroxy-2-cyclopenten-1-yl) moiety of the queuosine in the wobble position of the QUC anticodon. The chain is Glutamyl-Q tRNA(Asp) synthetase from Klebsiella pneumoniae (strain 342).